The primary structure comprises 30 residues: Cyclotide vdif-A (30 aa).

The cyclopeptide (Gly-Asn) cross-link spans 1–30 (GIPCGESCVFIPCISSVVGCSCKSKVCYRN). Disulfide bonds link C4–C20, C8–C22, and C13–C27.

The protein belongs to the cyclotide family. Bracelet subfamily. Post-translationally, this is a cyclic peptide.

In terms of biological role, probably participates in a plant defense mechanism. The chain is Cyclotide vdif-A from Viola diffusa.